The following is a 362-amino-acid chain: Ribosome-binding ATPase YchF (362 aa).

The OBG-type G domain maps to 2–258 (LSAGIVGLPN…LDANGRQDWL (257 aa)). 11–16 (NVGKST) provides a ligand contact to ATP. Residues Ser-15 and Thr-35 each contribute to the Mg(2+) site. The TGS domain occupies 281 to 347 (GLWSFFTFGK…EAKKQGLVRL (67 aa)).

Belongs to the TRAFAC class OBG-HflX-like GTPase superfamily. OBG GTPase family. YchF/OLA1 subfamily. Requires Mg(2+) as cofactor.

In terms of biological role, ATPase that binds to both the 70S ribosome and the 50S ribosomal subunit in a nucleotide-independent manner. This Mycoplasma pneumoniae (strain ATCC 29342 / M129 / Subtype 1) (Mycoplasmoides pneumoniae) protein is Ribosome-binding ATPase YchF.